The chain runs to 98 residues: Gas vesicle protein A (98 aa).

Belongs to the gas vesicle GvpA family. As to quaternary structure, the gas vesicle shell is 2 nm thick and consists of a single layer of this protein. It forms helical ribs nearly perpendicular to the long axis of the vesicle.

Its subcellular location is the gas vesicle shell. Gas vesicles are hollow, gas filled proteinaceous nanostructures found in some microorganisms. During planktonic growth they allow positioning of the organism at a favorable depth for light or nutrient acquisition. GvpA forms the protein shell. This is Gas vesicle protein A from Koribacter versatilis (strain Ellin345).